Reading from the N-terminus, the 1321-residue chain is Bile salt export pump (1321 aa).

Residues Met1–Met62 lie on the Cytoplasmic side of the membrane. In terms of domain architecture, ABC transmembrane type-1 1 spans Met62–Ala385. The helical transmembrane segment at Cys63–Phe83 threads the bilayer. The Extracellular segment spans residues Gly84–Gly147. N-linked (GlcNAc...) asparagine glycans are attached at residues Asn109, Asn116, Asn122, and Asn125. Residues Ile148–Ala168 traverse the membrane as a helical segment. Residues His169 to Asp215 are Cytoplasmic-facing. The chain crosses the membrane as a helical span at residues Gln216–Ser236. At Gln237 to Lys240 the chain is on the extracellular side. The chain crosses the membrane as a helical span at residues Leu241 to Leu261. Topologically, residues Ser262–Gly319 are cytoplasmic. The chain crosses the membrane as a helical span at residues Ile320–Ala340. Topologically, residues Phe341–Glu353 are extracellular. Residues Tyr354–Gly374 form a helical membrane-spanning segment. Residues Asn375–Met755 are Cytoplasmic-facing. The ABC transporter 1 domain maps to Ile420–Leu656. Residue Gly455–Ser462 participates in ATP binding. A Phosphothreonine modification is found at Thr586. Position 587 is a phosphoserine (Ser587). Residues Phe651–Ala672 are interaction with HAX1. The interval Gln659–Asp735 is disordered. Acidic residues predominate over residues Asp664–Ile677. Residues Ser690, Ser701, and Ser704 each carry the phosphoserine modification. Positions Val714–Pro731 are enriched in basic and acidic residues. An ABC transmembrane type-1 2 domain is found at Met755 to Lys1043. The helical transmembrane segment at Leu756–Phe776 threads the bilayer. The Extracellular portion of the chain corresponds to Ser777–Gln794. The helical transmembrane segment at Ile795–Leu815 threads the bilayer. Over Gln816–Gln869 the chain is Cytoplasmic. The next 2 membrane-spanning stretches (helical) occupy residues Gly870–Met890 and Ile891–Leu911. Residues Ala912–Asn979 are Cytoplasmic-facing. A helical transmembrane segment spans residues Val980 to Tyr1000. The Extracellular portion of the chain corresponds to Arg1001–Gly1011. Residues Leu1012–Gly1032 form a helical membrane-spanning segment. Residues Arg1033–Ser1321 lie on the Cytoplasmic side of the membrane. One can recognise an ABC transporter 2 domain in the interval Ile1078 to Thr1316. Position 1113-1120 (Gly1113–Ser1120) interacts with ATP. Phosphoserine is present on residues Ser1214 and Ser1321.

The protein belongs to the ABC transporter superfamily. ABCB family. Multidrug resistance exporter (TC 3.A.1.201) subfamily. As to quaternary structure, interacts with HAX1. Interacts with the adapter protein complex 2 (AP-2) throught AP2A2 or AP2A1; this interaction regulates cell membrane expression of ABCB11 through its internalization in a clathrin-dependent manner and its subsequent degradation. In terms of processing, N-glycosylated. Post-translationally, ubiquitinated; short-chain ubiquitination regulates cell-Surface expression of ABCB11. As to expression, expressed predominantly, if not exclusively in the liver, where it was further localized to the canalicular microvilli and to subcanalicular vesicles of the hepatocytes by in situ.

The protein resides in the apical cell membrane. It is found in the recycling endosome membrane. The protein localises to the endosome. It localises to the cell membrane. It catalyses the reaction cholate(in) + ATP + H2O = cholate(out) + ADP + phosphate + H(+). The enzyme catalyses taurocholate(in) + ATP + H2O = taurocholate(out) + ADP + phosphate + H(+). It carries out the reaction glycocholate(in) + ATP + H2O = glycocholate(out) + ADP + phosphate + H(+). The catalysed reaction is glycochenodeoxycholate(in) + ATP + H2O = glycochenodeoxycholate(out) + ADP + phosphate + H(+). It catalyses the reaction taurochenodeoxycholate(in) + ATP + H2O = taurochenodeoxycholate(out) + ADP + phosphate + H(+). The enzyme catalyses glycoursodeoxycholate(in) + ATP + H2O = glycoursodeoxycholate(out) + ADP + phosphate + H(+). It carries out the reaction tauroursodeoxycholate(in) + ATP + H2O = tauroursodeoxycholate(out) + ADP + phosphate + H(+). The catalysed reaction is taurodeoxycholate(in) + ATP + H2O = taurodeoxycholate(out) + ADP + phosphate + H(+). It catalyses the reaction taurolithocholate 3-sulfate(in) + ATP + H2O = taurolithocholate 3-sulfate(out) + ADP + phosphate + H(+). The enzyme catalyses pravastatin(in) + ATP + H2O = pravastatin(out) + ADP + phosphate + H(+). With respect to regulation, the uptake of taurocholate is inhibited by taurolithocholate sulfate with an IC(50) of 9 uM. Pravastatin competitively inhibits the transport of taurocholic acid. Cyclosporin A, glibenclamide, rifampicin and troglitazonestrongly competitively inhibit the transport activity of taurocholate. The canalicular transport activity of taurocholate is strongly dependent on canalicular membrane cholesterol content. The uptake of taurocholate is increased by short- and medium-chain fatty acids. Cholesterol increases transport capacity of taurocholate without affecting the affinity for the substrate. Its function is as follows. Catalyzes the transport of the major hydrophobic bile salts, such as taurine and glycine-conjugated cholic acid across the canalicular membrane of hepatocytes in an ATP-dependent manner, therefore participates in hepatic bile acid homeostasis and consequently to lipid homeostasis through regulation of biliary lipid secretion in a bile salts dependent manner. Transports taurine-conjugated bile salts more rapidly than glycine-conjugated bile salts. Also transports non-bile acid compounds, such as pravastatin and fexofenadine in an ATP-dependent manner and may be involved in their biliary excretion. This chain is Bile salt export pump, found in Oryctolagus cuniculus (Rabbit).